Here is a 372-residue protein sequence, read N- to C-terminus: Gustatory and pheromone receptor 39a, isoform B (372 aa).

The Cytoplasmic segment spans residues 1–32 (MGTRNRKLLFFLHYQRYLGLTNLDFSKSLHIY). The helical transmembrane segment at 33-53 (WLHGTWSSTAIQIVVVGVFMA) threads the bilayer. The Extracellular portion of the chain corresponds to 54–59 (ALLGAL). Residues 60–80 (AESLYYMETKSQTGNTFDNAV) traverse the membrane as a helical segment. At 81 to 122 (ILTTSVTQLLANLWLRSQQKSQVNLLQRLSQVVELLQFEPYA) the chain is on the cytoplasmic side. The helical transmembrane segment at 123–143 (VPQFRWLYRIWLLVCLIYGAM) threads the bilayer. The Extracellular segment spans residues 144 to 147 (VTHF). Residues 148–168 (GINWLTTMQISRVLTLIGFVY) form a helical membrane-spanning segment. Over 169 to 224 (RCVLANFQFTCYTGMVVILKKLLQVQVKQLEHLVSTTTISMAGVAGCLRTHDEILL) the chain is Cytoplasmic. The helical transmembrane segment at 225 to 245 (LGQRELIAVYGGVILFLFIYQ) threads the bilayer. The Extracellular segment spans residues 246-265 (VMQCILIFYISNLEGFHSSN). The chain crosses the membrane as a helical span at residues 266 to 286 (DLVLIFCWLAPMLFYLILPLV). Over 287 to 348 (VNDIHNQANK…KSTLFKLFTA (62 aa)) the chain is Cytoplasmic. The chain crosses the membrane as a helical span at residues 349-368 (IFTYMVILVQFKEMENSTKS). Residue I369 is a topological domain, extracellular.

Belongs to the insect chemoreceptor superfamily. Gustatory receptor (GR) family. Gr21a subfamily. In terms of tissue distribution, expressed in the adult labellar chemosensory neurons. In larvae, is expressed in neurons of the terminal external chemosensory organ, as well as in the dorsal and posterior pharyngeal sense organs.

It localises to the cell membrane. Its function is as follows. Gustatory receptor which mediates acceptance or avoidance behavior, depending on its substrates. Plays a role in sustaining courtship behavior in males, possibly through the reception of a stimulating arrestant pheromone. The sequence is that of Gustatory and pheromone receptor 39a, isoform B (Gr39a) from Drosophila melanogaster (Fruit fly).